Here is a 95-residue protein sequence, read N- to C-terminus: Aspartyl/glutamyl-tRNA(Asn/Gln) amidotransferase subunit C (95 aa).

The protein belongs to the GatC family. As to quaternary structure, heterotrimer of A, B and C subunits.

The catalysed reaction is L-glutamyl-tRNA(Gln) + L-glutamine + ATP + H2O = L-glutaminyl-tRNA(Gln) + L-glutamate + ADP + phosphate + H(+). It carries out the reaction L-aspartyl-tRNA(Asn) + L-glutamine + ATP + H2O = L-asparaginyl-tRNA(Asn) + L-glutamate + ADP + phosphate + 2 H(+). Allows the formation of correctly charged Asn-tRNA(Asn) or Gln-tRNA(Gln) through the transamidation of misacylated Asp-tRNA(Asn) or Glu-tRNA(Gln) in organisms which lack either or both of asparaginyl-tRNA or glutaminyl-tRNA synthetases. The reaction takes place in the presence of glutamine and ATP through an activated phospho-Asp-tRNA(Asn) or phospho-Glu-tRNA(Gln). This is Aspartyl/glutamyl-tRNA(Asn/Gln) amidotransferase subunit C from Pelobacter propionicus (strain DSM 2379 / NBRC 103807 / OttBd1).